The primary structure comprises 459 residues: MTVELWLRLRGKGLAMLHVTRGVWGSRVRVWPLLPALLGPPRALSSLAAKMGEYRKMWNPREPRDWAQQYRERFIPFSKEQLLRLLIQEFHSSPAEKAALEAFSAHVDFCTLFHYHQILARLQALYDPINPDRETLDQPSLTDPQRLSNEQEVLRALEPLLAQANFSPLSEDTLAYALVVHHPQDEVQVTVNLDQYVYIHFWALGQRVGQMPLKSSVGSRRGFFTKLPPAERRYFKRVVLAARTKRGHLVLKSFKDTPLEGLEQLLPELKVRTPTLQRALLNLMLVVSGVAIFVNVGMVVLTDLKVATSLLLLLFAIFMGLRASKMFGQRRSAQALELAHMLYYRSTSNNSELLSALALRAQDEHTKEALLAHSFLARRPGGTQGSPEETSRWLRSEVENWLLAKSGCEVTFNGTRALAHLQALTPSMGLYPPPGFPKLDPVAPITSEPPQATPSSNIS.

Transmembrane regions (helical) follow at residues 280-300 and 301-321; these read LLNL…GMVV and LTDL…FMGL. Ser-332 is subject to Phosphoserine. Residues 435–459 are disordered; the sequence is GFPKLDPVAPITSEPPQATPSSNIS. Positions 448 to 459 are enriched in polar residues; that stretch reads EPPQATPSSNIS.

The protein resides in the membrane. This chain is Transmembrane protein 143 (TMEM143), found in Homo sapiens (Human).